Reading from the N-terminus, the 376-residue chain is Mitochondrial distribution and morphology protein 34 (376 aa).

The 194-residue stretch at 1-194 (MSFTFNWPRF…LPGIIHRLSQ (194 aa)) folds into the SMP-LTD domain. 2 disordered regions span residues 207-249 (SKHP…PKIV) and 286-376 (SVPP…LHPS). Residues 218–230 (EISEPGDYGEEGE) show a composition bias toward acidic residues. Positions 306 to 318 (VKAKRKRTYRLGG) are enriched in basic residues. The segment covering 350 to 362 (MDRYFRSYDDHSR) has biased composition (basic and acidic residues).

It belongs to the MDM34 family. Component of the ER-mitochondria encounter structure (ERMES) or MDM complex, composed of MMM1, MDM10, MDM12 and MDM34.

The protein localises to the mitochondrion outer membrane. Functionally, component of the ERMES/MDM complex, which serves as a molecular tether to connect the endoplasmic reticulum (ER) and mitochondria. Components of this complex are involved in the control of mitochondrial shape and protein biogenesis, and function in nonvesicular lipid trafficking between the ER and mitochondria. MDM34 is required for the interaction of the ER-resident membrane protein MMM1 and the outer mitochondrial membrane-resident beta-barrel protein MDM10. The sequence is that of Mitochondrial distribution and morphology protein 34 from Laccaria bicolor (strain S238N-H82 / ATCC MYA-4686) (Bicoloured deceiver).